Consider the following 133-residue polypeptide: p53 and DNA damage-regulated protein 1 (133 aa).

The protein belongs to the prefoldin subunit beta family. In terms of assembly, component of the PAQosome complex which is responsible for the biogenesis of several protein complexes and which consists of R2TP complex members RUVBL1, RUVBL2, RPAP3 and PIH1D1, URI complex members PFDN2, PFDN6, PDRG1, UXT and URI1 as well as ASDURF, POLR2E and DNAAF10/WDR92.

The protein localises to the cytoplasm. Its function is as follows. May play a role in chaperone-mediated protein folding. This Pongo abelii (Sumatran orangutan) protein is p53 and DNA damage-regulated protein 1 (PDRG1).